A 240-amino-acid chain; its full sequence is DNA repair protein RecO (240 aa).

It belongs to the RecO family.

Functionally, involved in DNA repair and RecF pathway recombination. The polypeptide is DNA repair protein RecO (Pseudoalteromonas atlantica (strain T6c / ATCC BAA-1087)).